The primary structure comprises 173 residues: Mediator of RNA polymerase II transcription subunit 10 (173 aa).

Polar residues predominate over residues 1 to 20; sequence MDPNSPMFQNTPQQPMSLQR. Positions 1–45 are disordered; that stretch reads MDPNSPMFQNTPQQPMSLQRSVDDRIDRERTAKKEKDDEKKKQED. Positions 21–45 are enriched in basic and acidic residues; sequence SVDDRIDRERTAKKEKDDEKKKQED.

It belongs to the Mediator complex subunit 10 family. In terms of assembly, component of the Mediator complex.

It localises to the nucleus. In terms of biological role, component of the Mediator complex, a coactivator involved in the regulated transcription of nearly all RNA polymerase II-dependent genes. Mediator functions as a bridge to convey information from gene-specific regulatory proteins to the basal RNA polymerase II transcription machinery. Mediator is recruited to promoters by direct interactions with regulatory proteins and serves as a scaffold for the assembly of a functional preinitiation complex with RNA polymerase II and the general transcription factors. The sequence is that of Mediator of RNA polymerase II transcription subunit 10 (mdt-10) from Caenorhabditis briggsae.